The following is a 209-amino-acid chain: Uracil phosphoribosyltransferase (209 aa).

Residues R79, R104, and D131–S139 each bind 5-phospho-alpha-D-ribose 1-diphosphate. Uracil-binding positions include I194 and G199–A201. D200 contributes to the 5-phospho-alpha-D-ribose 1-diphosphate binding site.

The protein belongs to the UPRTase family. Mg(2+) serves as cofactor.

It carries out the reaction UMP + diphosphate = 5-phospho-alpha-D-ribose 1-diphosphate + uracil. It participates in pyrimidine metabolism; UMP biosynthesis via salvage pathway; UMP from uracil: step 1/1. Its activity is regulated as follows. Allosterically activated by GTP. Catalyzes the conversion of uracil and 5-phospho-alpha-D-ribose 1-diphosphate (PRPP) to UMP and diphosphate. This Mesorhizobium japonicum (strain LMG 29417 / CECT 9101 / MAFF 303099) (Mesorhizobium loti (strain MAFF 303099)) protein is Uracil phosphoribosyltransferase.